A 471-amino-acid chain; its full sequence is Glutamate--tRNA ligase (471 aa).

Residues 9–19 (PSPTGFLHVGG) carry the 'HIGH' region motif. Zn(2+)-binding residues include cysteine 98, cysteine 100, cysteine 125, and aspartate 127. Positions 237 to 241 (KLSKR) match the 'KMSKS' region motif. Residue lysine 240 coordinates ATP.

This sequence belongs to the class-I aminoacyl-tRNA synthetase family. Glutamate--tRNA ligase type 1 subfamily. As to quaternary structure, monomer. Requires Zn(2+) as cofactor.

It is found in the cytoplasm. It catalyses the reaction tRNA(Glu) + L-glutamate + ATP = L-glutamyl-tRNA(Glu) + AMP + diphosphate. In terms of biological role, catalyzes the attachment of glutamate to tRNA(Glu) in a two-step reaction: glutamate is first activated by ATP to form Glu-AMP and then transferred to the acceptor end of tRNA(Glu). The protein is Glutamate--tRNA ligase of Aeromonas hydrophila subsp. hydrophila (strain ATCC 7966 / DSM 30187 / BCRC 13018 / CCUG 14551 / JCM 1027 / KCTC 2358 / NCIMB 9240 / NCTC 8049).